The following is a 159-amino-acid chain: MSFRIGHGYDVHKFTSAKQNIIIGGVEIAYHLGLEAHSDGDVLIHALCDAILGALGLGDIGKHFLDTDNQFKNIDSKFFLAEIKKMLDKKQYSISNIDCTIIAQAPKMLPHIEKMRACLANILEIQISQINIKATTTERLGFIGREEGIATHVVCLLYR.

A divalent metal cation is bound by residues D10 and H12. 4-CDP-2-C-methyl-D-erythritol 2-phosphate-binding positions include 10-12 and 37-38; these read DVH and HS. H45 lines the a divalent metal cation pocket. 4-CDP-2-C-methyl-D-erythritol 2-phosphate contacts are provided by residues 59–61, 64–68, 103–109, 135–138, F142, and R145; these read DIG, FLDTD, AQAPKML, and TTTE.

Belongs to the IspF family. Homotrimer. Requires a divalent metal cation as cofactor.

It carries out the reaction 4-CDP-2-C-methyl-D-erythritol 2-phosphate = 2-C-methyl-D-erythritol 2,4-cyclic diphosphate + CMP. It participates in isoprenoid biosynthesis; isopentenyl diphosphate biosynthesis via DXP pathway; isopentenyl diphosphate from 1-deoxy-D-xylulose 5-phosphate: step 4/6. In terms of biological role, involved in the biosynthesis of isopentenyl diphosphate (IPP) and dimethylallyl diphosphate (DMAPP), two major building blocks of isoprenoid compounds. Catalyzes the conversion of 4-diphosphocytidyl-2-C-methyl-D-erythritol 2-phosphate (CDP-ME2P) to 2-C-methyl-D-erythritol 2,4-cyclodiphosphate (ME-CPP) with a corresponding release of cytidine 5-monophosphate (CMP). The polypeptide is 2-C-methyl-D-erythritol 2,4-cyclodiphosphate synthase (Francisella tularensis subsp. tularensis (strain FSC 198)).